A 261-amino-acid polypeptide reads, in one-letter code: Cytochrome c oxidase subunit 3 (261 aa).

Residues 1 to 15 (MTHQTHAYHMVNPSP) lie on the Mitochondrial matrix side of the membrane. The chain crosses the membrane as a helical span at residues 16–34 (WPLTGALSALLLTSGLIMW). Topologically, residues 35-40 (FHFNSF) are mitochondrial intermembrane. The helical transmembrane segment at 41–66 (LLVIIGLTCMLLTMYQWWRDIVREGT) threads the bilayer. Over 67 to 72 (FQGHHT) the chain is Mitochondrial matrix. A helical membrane pass occupies residues 73 to 105 (PVVQKGLRYGMVLFIVSEVFFFLGFFWAFYHSS). At 106 to 128 (LAPTPELGGCWPPTGIHPLNPLE) the chain is on the mitochondrial intermembrane side. The chain crosses the membrane as a helical span at residues 129–152 (VPLLNTSILLASGVSITWAHHSLM). Residues 153–155 (EGN) lie on the Mitochondrial matrix side of the membrane. A helical membrane pass occupies residues 156–183 (RKQMIQALSITILLGIYFTILQASEYYE). The Mitochondrial intermembrane portion of the chain corresponds to 184–190 (SSFTISD). A helical transmembrane segment spans residues 191–223 (GVYGSTFFVATGFHGLHVIIGTTFLIVCLLRQF). The Mitochondrial matrix portion of the chain corresponds to 224–232 (NFHFTSTHH). The helical transmembrane segment at 233–256 (FGFEAAAWYWHFVDVVWLFLYVSI) threads the bilayer. The Mitochondrial intermembrane portion of the chain corresponds to 257 to 261 (YWWGS).

This sequence belongs to the cytochrome c oxidase subunit 3 family. As to quaternary structure, component of the cytochrome c oxidase (complex IV, CIV), a multisubunit enzyme composed of 14 subunits. The complex is composed of a catalytic core of 3 subunits MT-CO1, MT-CO2 and MT-CO3, encoded in the mitochondrial DNA, and 11 supernumerary subunits COX4I, COX5A, COX5B, COX6A, COX6B, COX6C, COX7A, COX7B, COX7C, COX8 and NDUFA4, which are encoded in the nuclear genome. The complex exists as a monomer or a dimer and forms supercomplexes (SCs) in the inner mitochondrial membrane with NADH-ubiquinone oxidoreductase (complex I, CI) and ubiquinol-cytochrome c oxidoreductase (cytochrome b-c1 complex, complex III, CIII), resulting in different assemblies (supercomplex SCI(1)III(2)IV(1) and megacomplex MCI(2)III(2)IV(2)).

The protein resides in the mitochondrion inner membrane. It catalyses the reaction 4 Fe(II)-[cytochrome c] + O2 + 8 H(+)(in) = 4 Fe(III)-[cytochrome c] + 2 H2O + 4 H(+)(out). Its function is as follows. Component of the cytochrome c oxidase, the last enzyme in the mitochondrial electron transport chain which drives oxidative phosphorylation. The respiratory chain contains 3 multisubunit complexes succinate dehydrogenase (complex II, CII), ubiquinol-cytochrome c oxidoreductase (cytochrome b-c1 complex, complex III, CIII) and cytochrome c oxidase (complex IV, CIV), that cooperate to transfer electrons derived from NADH and succinate to molecular oxygen, creating an electrochemical gradient over the inner membrane that drives transmembrane transport and the ATP synthase. Cytochrome c oxidase is the component of the respiratory chain that catalyzes the reduction of oxygen to water. Electrons originating from reduced cytochrome c in the intermembrane space (IMS) are transferred via the dinuclear copper A center (CU(A)) of subunit 2 and heme A of subunit 1 to the active site in subunit 1, a binuclear center (BNC) formed by heme A3 and copper B (CU(B)). The BNC reduces molecular oxygen to 2 water molecules using 4 electrons from cytochrome c in the IMS and 4 protons from the mitochondrial matrix. The protein is Cytochrome c oxidase subunit 3 (MT-CO3) of Osphranter robustus (Wallaroo).